The primary structure comprises 407 residues: Protein arginine N-methyltransferase 2 (407 aa).

An RMT2 domain is found at 186–407 (TAADQATYLK…YYYHPEIRFA (222 aa)). S-adenosyl-L-methionine contacts are provided by residues Tyr-193, Met-223, 246–251 (FGMGII), 267–269 (EAH), 294–295 (WQ), and Asp-315.

The protein belongs to the class I-like SAM-binding methyltransferase superfamily. RMT2 methyltransferase family. In terms of assembly, monomer.

The protein resides in the cytoplasm. The protein localises to the nucleus. S-adenosyl-L-methionine-dependent protein-arginine N-methyltransferase that methylates the delta-nitrogen atom of arginine residues to form N5-methylarginine (type IV) in target proteins. Monomethylates ribosomal protein L12. This chain is Protein arginine N-methyltransferase 2, found in Kluyveromyces lactis (strain ATCC 8585 / CBS 2359 / DSM 70799 / NBRC 1267 / NRRL Y-1140 / WM37) (Yeast).